The following is a 281-amino-acid chain: Undecaprenyl-diphosphatase (281 aa).

A run of 8 helical transmembrane segments spans residues 4–24 (IEILKSIFFGIVEGITEWLPI), 45–65 (AFMSMFNVVIQLGAILAVMVI), 89–109 (WLKVLIATLPLLGVFKFDDWF), 113–133 (FHNMVSVALMLIIYGVAFIYL), 152–172 (LPYTTAFYIGLFQVLALLPGT), 190–210 (SVVTEFTFYLGIPVMFGASAL), 225–245 (GQLFLLLVAMGVAFAVSMVAI), and 257–277 (FTLFGKYRIVLGSVLLLYSFV).

It belongs to the UppP family.

The protein localises to the cell membrane. The enzyme catalyses di-trans,octa-cis-undecaprenyl diphosphate + H2O = di-trans,octa-cis-undecaprenyl phosphate + phosphate + H(+). Its function is as follows. Catalyzes the dephosphorylation of undecaprenyl diphosphate (UPP). Confers resistance to bacitracin. In Streptococcus pneumoniae (strain Hungary19A-6), this protein is Undecaprenyl-diphosphatase.